The primary structure comprises 419 residues: UDP-N-acetylglucosamine 1-carboxyvinyltransferase (419 aa).

22-23 (KN) serves as a coordination point for phosphoenolpyruvate. Arginine 91 is a binding site for UDP-N-acetyl-alpha-D-glucosamine. Residue cysteine 115 is the Proton donor of the active site. Cysteine 115 carries the 2-(S-cysteinyl)pyruvic acid O-phosphothioketal modification. Residues 120 to 124 (RPVDL), 160 to 163 (KVSV), aspartate 305, and valine 327 contribute to the UDP-N-acetyl-alpha-D-glucosamine site.

It belongs to the EPSP synthase family. MurA subfamily.

The protein localises to the cytoplasm. It carries out the reaction phosphoenolpyruvate + UDP-N-acetyl-alpha-D-glucosamine = UDP-N-acetyl-3-O-(1-carboxyvinyl)-alpha-D-glucosamine + phosphate. Its pathway is cell wall biogenesis; peptidoglycan biosynthesis. Cell wall formation. Adds enolpyruvyl to UDP-N-acetylglucosamine. This Salmonella agona (strain SL483) protein is UDP-N-acetylglucosamine 1-carboxyvinyltransferase.